A 180-amino-acid chain; its full sequence is Large ribosomal subunit protein uL5 (180 aa).

The protein belongs to the universal ribosomal protein uL5 family. Part of the 50S ribosomal subunit; part of the 5S rRNA/L5/L18/L25 subcomplex. Contacts the 5S rRNA and the P site tRNA. Forms a bridge to the 30S subunit in the 70S ribosome.

Functionally, this is one of the proteins that bind and probably mediate the attachment of the 5S RNA into the large ribosomal subunit, where it forms part of the central protuberance. In the 70S ribosome it contacts protein S13 of the 30S subunit (bridge B1b), connecting the 2 subunits; this bridge is implicated in subunit movement. Contacts the P site tRNA; the 5S rRNA and some of its associated proteins might help stabilize positioning of ribosome-bound tRNAs. The polypeptide is Large ribosomal subunit protein uL5 (Roseiflexus castenholzii (strain DSM 13941 / HLO8)).